The primary structure comprises 98 residues: Protein S100-A11 (98 aa).

Threonine 5 carries the post-translational modification Phosphothreonine. EF-hand domains follow at residues 12 to 47 and 50 to 85; these read LIAVFQKYSGKDGNSCHLSKTEFLSFMNTELAAFTK and KDPGVLDRMMKKLDLNSDGQLDFQEFLNLIGGLAIA. Position 22 is an N6-acetyllysine (lysine 22). Residues serine 26, histidine 28, glutamate 33, aspartate 63, asparagine 65, aspartate 67, glutamine 69, and glutamate 74 each coordinate Ca(2+).

Belongs to the S-100 family. Homodimer; disulfide-linked. Post-translationally, phosphorylation at Thr-5 significantly suppresses homodimerization and promotes association with NCL/nucleolin which induces nuclear translocation.

It is found in the cytoplasm. Its subcellular location is the nucleus. Its function is as follows. Facilitates the differentiation and the cornification of keratinocytes. This Rattus norvegicus (Rat) protein is Protein S100-A11 (S100a11).